A 242-amino-acid chain; its full sequence is TGACG-sequence-specific DNA-binding protein TGA-1B (242 aa).

Positions 1–125 are disordered; that stretch reads EFCDFSGNQA…HSSPNFENNS (125 aa). The span at 18–45 shows a compositional bias: polar residues; sequence DTSSPELRQSSSGSDVLNATSSTSSHQV. The span at 66 to 79 shows a compositional bias: basic and acidic residues; sequence EGSRESANDNKGLG. The span at 88–125 shows a compositional bias: polar residues; the sequence is SPESQGSGNYGSNVSEGLNYPSDSNKSVHSSPNFENNS. Residues 183 to 242 enclose the bZIP domain; it reads DEKKRARLVRNRESAQLSRQRKKHYVEELEDKVRIMHSTIQDLNAKVAYIIAENATLKTQ. The basic motif stretch occupies residues 185–216; that stretch reads KKRARLVRNRESAQLSRQRKKHYVEELEDKVR. The tract at residues 225–239 is leucine-zipper; the sequence is LNAKVAYIIAENATL.

The protein belongs to the bZIP family.

It localises to the nucleus. Binds specifically to the DNA sequence 5'-TGACG-3'. In Nicotiana tabacum (Common tobacco), this protein is TGACG-sequence-specific DNA-binding protein TGA-1B (TGA1B).